A 327-amino-acid chain; its full sequence is Zinc transport protein ZntB (327 aa).

Residues methionine 1–methionine 273 are Cytoplasmic-facing. A helical transmembrane segment spans residues alanine 274–isoleucine 294. The Periplasmic segment spans residues proline 295–glutamine 300. A helical membrane pass occupies residues phenylalanine 301–leucine 321. Residues histidine 322–leucine 327 are Cytoplasmic-facing.

The protein belongs to the CorA metal ion transporter (MIT) (TC 1.A.35) family.

It is found in the cell inner membrane. It catalyses the reaction Zn(2+)(out) + H(+)(out) = Zn(2+)(in) + H(+)(in). In terms of biological role, zinc transporter. Acts as a Zn(2+):proton symporter, which likely mediates zinc ion uptake. In Escherichia coli O139:H28 (strain E24377A / ETEC), this protein is Zinc transport protein ZntB.